The chain runs to 486 residues: 23S rRNA (uracil(1939)-C(5))-methyltransferase RlmD (486 aa).

The TRAM domain occupies 14–76 (AAQDGSGLPE…NHWEQANLTA (63 aa)). [4Fe-4S] cluster-binding residues include cysteine 89, cysteine 99, cysteine 102, and cysteine 181. Positions 289, 318, 323, 339, 374, and 395 each coordinate S-adenosyl-L-methionine. Cysteine 442 (nucleophile) is an active-site residue.

Belongs to the class I-like SAM-binding methyltransferase superfamily. RNA M5U methyltransferase family. RlmD subfamily.

It catalyses the reaction uridine(1939) in 23S rRNA + S-adenosyl-L-methionine = 5-methyluridine(1939) in 23S rRNA + S-adenosyl-L-homocysteine + H(+). In terms of biological role, catalyzes the formation of 5-methyl-uridine at position 1939 (m5U1939) in 23S rRNA. This is 23S rRNA (uracil(1939)-C(5))-methyltransferase RlmD from Verminephrobacter eiseniae (strain EF01-2).